Here is a 166-residue protein sequence, read N- to C-terminus: Regulatory protein RecX (166 aa).

Belongs to the RecX family.

It localises to the cytoplasm. In terms of biological role, modulates RecA activity. The chain is Regulatory protein RecX from Shigella dysenteriae serotype 1 (strain Sd197).